Consider the following 479-residue polypeptide: Deoxyribodipyrimidine photo-lyase (479 aa).

The Photolyase/cryptochrome alpha/beta domain maps to 6-137 (SLKAVWFRRD…PFYTFEDAYL (132 aa)). Tyrosine 229 serves as a coordination point for FAD. Arginine 233 is a binding site for DNA. FAD contacts are provided by residues 241 to 245 (TSRLS) and 278 to 285 (ELAWRDFY). 2 interaction with DNA regions span residues 278–285 (ELAWRDFY) and 344–345 (NR). 375–377 (DYD) lines the FAD pocket. Glutamine 407 lines the DNA pocket.

The protein belongs to the DNA photolyase class-1 family. Monomer. FAD serves as cofactor. It depends on (6R)-5,10-methylene-5,6,7,8-tetrahydrofolate as a cofactor.

It catalyses the reaction cyclobutadipyrimidine (in DNA) = 2 pyrimidine residues (in DNA).. Its function is as follows. Involved in repair of UV radiation-induced DNA damage. Catalyzes the light-dependent monomerization (300-600 nm) of cyclobutyl pyrimidine dimers (in cis-syn configuration), which are formed between adjacent bases on the same DNA strand upon exposure to ultraviolet radiation. This Alkalihalophilus pseudofirmus (strain ATCC BAA-2126 / JCM 17055 / OF4) (Bacillus pseudofirmus) protein is Deoxyribodipyrimidine photo-lyase (phr).